The chain runs to 300 residues: Protein SPEAR4 (300 aa).

Residues 1-10 show a composition bias toward polar residues; that stretch reads MCSKTSSVSY. A disordered region spans residues 1–45; it reads MCSKTSSVSYGNREDDDNYSSLCPKKQKHNNGGKKRVPRRGPGVA. The segment covering 25–39 has biased composition (basic residues); sequence KKQKHNNGGKKRVPR. The SPL signature appears at 40-48; sequence RGPGVAELE. The short motif at 294–300 is the EAR element; the sequence is IDLRLKL.

As to quaternary structure, interacts with SPL and SPEAR2. As to expression, expressed in leaves.

Adapter-like transcriptional repressor recruiting TPL/TPR coepressors to inhibit TCP transcription factors. May be involved in leaf development. The protein is Protein SPEAR4 of Arabidopsis thaliana (Mouse-ear cress).